We begin with the raw amino-acid sequence, 207 residues long: ATP-dependent Clp protease proteolytic subunit (207 aa).

Ser-111 functions as the Nucleophile in the catalytic mechanism. Residue His-136 is part of the active site.

It belongs to the peptidase S14 family. As to quaternary structure, fourteen ClpP subunits assemble into 2 heptameric rings which stack back to back to give a disk-like structure with a central cavity, resembling the structure of eukaryotic proteasomes.

It is found in the cytoplasm. It carries out the reaction Hydrolysis of proteins to small peptides in the presence of ATP and magnesium. alpha-casein is the usual test substrate. In the absence of ATP, only oligopeptides shorter than five residues are hydrolyzed (such as succinyl-Leu-Tyr-|-NHMec, and Leu-Tyr-Leu-|-Tyr-Trp, in which cleavage of the -Tyr-|-Leu- and -Tyr-|-Trp bonds also occurs).. Cleaves peptides in various proteins in a process that requires ATP hydrolysis. Has a chymotrypsin-like activity. Plays a major role in the degradation of misfolded proteins. The sequence is that of ATP-dependent Clp protease proteolytic subunit from Yersinia pseudotuberculosis serotype O:1b (strain IP 31758).